A 276-amino-acid chain; its full sequence is Type II pantothenate kinase (276 aa).

Residue 8 to 15 (DAGGTLTK) participates in ATP binding. E76 serves as the catalytic Proton acceptor. Residues T105, 127 to 131 (GGTIM), F143, and S230 each bind ATP.

It belongs to the type II pantothenate kinase family. Homodimer.

The protein resides in the cytoplasm. It catalyses the reaction (R)-pantothenate + ATP = (R)-4'-phosphopantothenate + ADP + H(+). The protein operates within cofactor biosynthesis; coenzyme A biosynthesis; CoA from (R)-pantothenate: step 1/5. Its function is as follows. Catalyzes the phosphorylation of pantothenate (Pan), the first step in CoA biosynthesis. This Bacillus thuringiensis subsp. konkukian (strain 97-27) protein is Type II pantothenate kinase.